A 944-amino-acid chain; its full sequence is 2-oxoglutarate dehydrogenase E1 component (944 aa).

The segment at 918 to 944 (SSTAEGDPTVHKKEQERIVSDSLTRKN) is disordered. A compositionally biased stretch (basic and acidic residues) spans 925–936 (PTVHKKEQERIV).

This sequence belongs to the alpha-ketoglutarate dehydrogenase family. As to quaternary structure, homodimer. Part of the 2-oxoglutarate dehydrogenase (OGDH) complex composed of E1 (2-oxoglutarate dehydrogenase), E2 (dihydrolipoamide succinyltransferase) and E3 (dihydrolipoamide dehydrogenase); the complex contains multiple copies of the three enzymatic components (E1, E2 and E3). Thiamine diphosphate is required as a cofactor.

The enzyme catalyses N(6)-[(R)-lipoyl]-L-lysyl-[protein] + 2-oxoglutarate + H(+) = N(6)-[(R)-S(8)-succinyldihydrolipoyl]-L-lysyl-[protein] + CO2. Functionally, E1 component of the 2-oxoglutarate dehydrogenase (OGDH) complex which catalyzes the decarboxylation of 2-oxoglutarate, the first step in the conversion of 2-oxoglutarate to succinyl-CoA and CO(2). This is 2-oxoglutarate dehydrogenase E1 component from Bacillus pumilus (strain SAFR-032).